The following is a 464-amino-acid chain: F-box/WD repeat-containing protein 12 (464 aa).

An F-box domain is found at 1 to 45 (MEIRLPDLALKRIFSFLDLFGLLQVSQVNKHWNRIADSDYLWRSL). WD repeat units follow at residues 89-132 (YKVT…CAWD), 136-174 (GTMI…KVWN), 178-217 (RDAL…YTFT), 222-263 (RDVS…FLTE), 270-315 (EGSV…ITFD), 320-367 (KTGG…LLFS), 370-407 (GFLL…YMWE), and 416-461 (RSCC…VMYS).

In terms of assembly, interacts with SKP1. Interacts with CUL1. Interacts with IL22RA1. In terms of tissue distribution, ubiquitously expressed.

It participates in protein modification; protein ubiquitination. Functionally, substrate-recognition component of the SCF (SKP1-CUL1-F-box protein)-type E3 ubiquitin ligase complex. Promotes degradation of interleukin-22 receptor subunit IL22RA1 in resting and IL22-stimulated conditions by facilitating its ubiquitination. Functions as a cell growth suppressor. This Homo sapiens (Human) protein is F-box/WD repeat-containing protein 12 (FBXW12).